Here is a 320-residue protein sequence, read N- to C-terminus: Probable cell division protein WhiA (320 aa).

A DNA-binding region (H-T-H motif) is located at residues serine 282 to glutamine 315.

This sequence belongs to the WhiA family.

Involved in cell division and chromosome segregation. The polypeptide is Probable cell division protein WhiA (Bifidobacterium animalis subsp. lactis (strain AD011)).